The sequence spans 1084 residues: CRISPR-associated endonuclease Cas9 (1084 aa).

D8 (for RuvC-like nuclease domain) is an active-site residue. The Mn(2+) site is built by D8, E496, and E500. One can recognise an HNH Cas9-type domain in the interval 504–665 (TEKRAREMDG…MDEEIDARSM (162 aa)). The Proton acceptor for HNH nuclease domain role is filled by H573. H727 is a binding site for Mn(2+).

The protein belongs to the CRISPR-associated protein Cas9 family. Subtype II-C subfamily. Monomer. Binds crRNA and tracrRNA. Mg(2+) serves as cofactor.

Functionally, CRISPR (clustered regularly interspaced short palindromic repeat) is an adaptive immune system that provides protection against mobile genetic elements (viruses, transposable elements and conjugative plasmids). CRISPR clusters contain spacers, sequences complementary to antecedent mobile elements, and target invading nucleic acids. CRISPR clusters are transcribed and processed into CRISPR RNA (crRNA). In type II CRISPR systems correct processing of pre-crRNA requires a trans-encoded small RNA (tracrRNA), endogenous ribonuclease 3 (rnc) and this protein. The tracrRNA serves as a guide for ribonuclease 3-aided processing of pre-crRNA. Subsequently Cas9/crRNA/tracrRNA endonucleolytically cleaves linear or circular dsDNA target complementary to the spacer; Cas9 is inactive in the absence of the 2 guide RNAs (gRNA). Cas9 recognizes the protospacer adjacent motif (PAM) in the CRISPR repeat sequences to help distinguish self versus nonself, as targets within the bacterial CRISPR locus do not have PAMs. PAM recognition is also required for catalytic activity. In Corynebacterium diphtheriae (strain ATCC 700971 / NCTC 13129 / Biotype gravis), this protein is CRISPR-associated endonuclease Cas9.